A 121-amino-acid chain; its full sequence is Nitrogenase-stabilizing/protective protein NifW (121 aa).

It belongs to the NifW family. As to quaternary structure, homotrimer; associates with NifD.

In terms of biological role, may protect the nitrogenase Fe-Mo protein from oxidative damage. In Synechococcus sp. (strain JA-2-3B'a(2-13)) (Cyanobacteria bacterium Yellowstone B-Prime), this protein is Nitrogenase-stabilizing/protective protein NifW.